The primary structure comprises 160 residues: uncharacterized protein (160 aa).

Positions 26, 28, 50, and 61 each coordinate Zn(2+). The GRF-type; atypical zinc finger occupies Cys26–Ala69.

This is an uncharacterized protein from Arabidopsis thaliana (Mouse-ear cress).